The following is a 645-amino-acid chain: Serine/threonine-protein kinase Nek11 (645 aa).

A Protein kinase domain is found at 29–287 (YVLQQKLGSG…AIEILKIPYL (259 aa)). Residues 35 to 43 (LGSGSFGTV) and lysine 61 each bind ATP. The active-site Proton acceptor is the aspartate 158. Serine 273 bears the Phosphoserine; by CHEK1 mark. Residues 346 to 385 (RLRKLQAADEKARKLKKIVEEKYEENSKRMQELRSRNFQQ) adopt a coiled-coil conformation. Positions 399 to 445 (GMEEKEEQPEGRLSCSPQDEDEERWQGREEESDEPTLENLPESQPIP) are disordered.

Belongs to the protein kinase superfamily. NEK Ser/Thr protein kinase family. NIMA subfamily. Interacts with isoform 1 of NEK2. The cofactor is Mn(2+). Mg(2+) is required as a cofactor. Post-translationally, phosphorylated by NEK2. Phosphorylation at Ser-273 is important for its activation. In terms of tissue distribution, poorly expressed in cerebellum, trachea, lung, appendix, and uterus.

It localises to the nucleus. The protein localises to the nucleolus. It carries out the reaction L-seryl-[protein] + ATP = O-phospho-L-seryl-[protein] + ADP + H(+). The catalysed reaction is L-threonyl-[protein] + ATP = O-phospho-L-threonyl-[protein] + ADP + H(+). Its activity is regulated as follows. Autorepressed by intramolecular binding of the C-terminus which dissociates following phosphorylation by NEK2 isoform 1 in G1/S-arrested cells. NEK2 isoform 2 is largely not present in the nucleolus, and does not appear to phosphorylate NEK11. Activated in response to DNA damage. Inhibited by zinc. Its function is as follows. Protein kinase which plays an important role in the G2/M checkpoint response to DNA damage. Controls degradation of CDC25A by directly phosphorylating it on residues whose phosphorylation is required for BTRC-mediated polyubiquitination and degradation. The protein is Serine/threonine-protein kinase Nek11 of Homo sapiens (Human).